The primary structure comprises 457 residues: Bifunctional protein GlmU (457 aa).

The tract at residues 1–230 (MPLSLPLHIV…PREVEGVNDL (230 aa)) is pyrophosphorylase. Residues 12–15 (LAAG), lysine 26, glutamine 78, 83–84 (GT), 105–107 (YGD), glycine 140, glutamate 155, asparagine 170, and asparagine 228 each bind UDP-N-acetyl-alpha-D-glucosamine. Aspartate 107 lines the Mg(2+) pocket. Position 228 (asparagine 228) interacts with Mg(2+). Positions 231–251 (WQLTQLERTWQIRAARALCLQ) are linker. The segment at 252 to 457 (GARVADPARL…DGWQRPKKKT (206 aa)) is N-acetyltransferase. UDP-N-acetyl-alpha-D-glucosamine contacts are provided by arginine 334 and lysine 352. Histidine 364 functions as the Proton acceptor in the catalytic mechanism. Residues tyrosine 367 and asparagine 378 each coordinate UDP-N-acetyl-alpha-D-glucosamine. Acetyl-CoA is bound by residues alanine 381, 387-388 (NY), serine 406, alanine 424, and arginine 441.

The protein in the N-terminal section; belongs to the N-acetylglucosamine-1-phosphate uridyltransferase family. It in the C-terminal section; belongs to the transferase hexapeptide repeat family. Homotrimer. Mg(2+) serves as cofactor.

It localises to the cytoplasm. The enzyme catalyses alpha-D-glucosamine 1-phosphate + acetyl-CoA = N-acetyl-alpha-D-glucosamine 1-phosphate + CoA + H(+). The catalysed reaction is N-acetyl-alpha-D-glucosamine 1-phosphate + UTP + H(+) = UDP-N-acetyl-alpha-D-glucosamine + diphosphate. The protein operates within nucleotide-sugar biosynthesis; UDP-N-acetyl-alpha-D-glucosamine biosynthesis; N-acetyl-alpha-D-glucosamine 1-phosphate from alpha-D-glucosamine 6-phosphate (route II): step 2/2. Its pathway is nucleotide-sugar biosynthesis; UDP-N-acetyl-alpha-D-glucosamine biosynthesis; UDP-N-acetyl-alpha-D-glucosamine from N-acetyl-alpha-D-glucosamine 1-phosphate: step 1/1. It functions in the pathway bacterial outer membrane biogenesis; LPS lipid A biosynthesis. Its function is as follows. Catalyzes the last two sequential reactions in the de novo biosynthetic pathway for UDP-N-acetylglucosamine (UDP-GlcNAc). The C-terminal domain catalyzes the transfer of acetyl group from acetyl coenzyme A to glucosamine-1-phosphate (GlcN-1-P) to produce N-acetylglucosamine-1-phosphate (GlcNAc-1-P), which is converted into UDP-GlcNAc by the transfer of uridine 5-monophosphate (from uridine 5-triphosphate), a reaction catalyzed by the N-terminal domain. This Xylella fastidiosa (strain M12) protein is Bifunctional protein GlmU.